Here is a 686-residue protein sequence, read N- to C-terminus: Mitochondrial Rho GTPase 1 (686 aa).

The Cytoplasmic segment spans residues 1–648; sequence MPRRDLVRIV…PAQRIRVVAR (648 aa). Positions 4–172 constitute a Miro 1 domain; that stretch reads RDLVRIVLVG…FYFAQKAVLH (169 aa). Residues 13–20, 59–63, and 117–120 contribute to the GTP site; these read GDDGVGKS, DTSSN, and NKID. EF-hand domains lie at 188–223 and 341–376; these read KCLEALKRIFTISDVDKDGLLNAHELNQFQQKCFST and LGNQFLTDIFEAYDKDQDGALSQNELDDLFSTSPGN. Residues Asp201, Asp203, Asp205, Glu212, Asp354, Asp356, Asp358, and Glu365 each coordinate Ca(2+). Residues 455-624 form the Miro 2 domain; that stretch reads RNVFLCYVLG…WVAITRVALD (170 aa). GTP is bound by residues 464 to 471, 506 to 510, and 574 to 577; these read GATGSGKT, EMEGV, and TKSD. A helical; Anchor for type IV membrane protein transmembrane segment spans residues 649-665; that stretch reads WGLAATTISAIVAVWMK. The Mitochondrial intermembrane portion of the chain corresponds to 666–686; the sequence is WQGYSFKGIWGWMAKFAGLRT.

This sequence belongs to the mitochondrial Rho GTPase family.

The protein resides in the mitochondrion outer membrane. Mitochondrial GTPase involved in mitochondrial trafficking. Probably involved in control of anterograde transport of mitochondria and their subcellular distribution. The protein is Mitochondrial Rho GTPase 1 (GEM1) of Cryptococcus neoformans var. neoformans serotype D (strain B-3501A) (Filobasidiella neoformans).